The primary structure comprises 668 residues: Spartin (668 aa).

Residue Met1 is modified to N-acetylmethionine. Residues 16–94 form the MIT domain; that stretch reads IKEAYKKAFV…LQNVRTRLEI (79 aa). The disordered stretch occupies residues 110–176; it reads VPKLYPEFPP…PSEAPPAYTP (67 aa). Basic and acidic residues predominate over residues 118–127; sequence PPKDMSEKSP. The residue at position 126 (Ser126) is a Phosphoserine. A compositionally biased stretch (low complexity) spans 128–162; sequence EPQSLSSLPQHSEVNGSTSTASAESSSTPTTLSLP. The interval 190-380 is ubiquitin-binding region (UBR) domain; it reads ESGEFSSVGE…QLDPSSKDVR (191 aa). An LC3-interacting region (LIR); mediates interaction with MAP1LC3A AND MAP1LC3C motif is present at residues 193–200; that stretch reads EFSSVGEN. Positions 348–396 are disordered; it reads FQIPGISGSASDQLKEASGTDVRQLDPSSKDVRQKGKRGKKTKGTSSEE. Residue Lys362 forms a Glycyl lysine isopeptide (Lys-Gly) (interchain with G-Cter in ubiquitin) linkage. The 185-residue stretch at 427-611 folds into the Senescence domain; sequence ILSGASWVSW…YNIDNIGIKA (185 aa). The required for localization to lipid droplets stretch occupies residues 431-503; the sequence is ASWVSWGLVK…LVDGVCTVAN (73 aa). Ser470 is subject to Phosphoserine. Residues 631-668 form a disordered region; sequence IDNSKGENPGGGASANLKGEKDEQKEGPEKNGAKKKDK. Residues 648–668 are compositionally biased toward basic and acidic residues; sequence KGEKDEQKEGPEKNGAKKKDK.

Interacts with ITCH and WWP1. Interacts (via MIT domain) with IST1; leading to the recruitment of SPART to midbodies. Interacts with MAP1LC3A and MAP1LC3C. In terms of processing, ubiquitinated; ubiquitination does not require ITCH and WWP1.

The protein resides in the cytoplasm. Its subcellular location is the midbody. The protein localises to the lipid droplet. In terms of biological role, lipophagy receptor that plays an important role in lipid droplet (LD) turnover in motor neurons. Localizes to LDs and interacts with components of the autophagy machinery, such as MAP1LC3A/C proteins to deliver LDs to autophagosomes for degradation via lipophagy. Lipid transfer protein required for lipid droplet degradation, including by lipophagy. Can bind and transfer all lipid species found in lipid droplets, from phospholipids to triglycerides and sterol esters but the direction of lipid transfer by spartin and its cargos are unknown. May be implicated in endosomal trafficking, or microtubule dynamics, or both. Participates in cytokinesis. This chain is Spartin, found in Bos taurus (Bovine).